Reading from the N-terminus, the 477-residue chain is Glycogen synthase (477 aa).

An ADP-alpha-D-glucose-binding site is contributed by Lys15.

This sequence belongs to the glycosyltransferase 1 family. Bacterial/plant glycogen synthase subfamily.

The catalysed reaction is [(1-&gt;4)-alpha-D-glucosyl](n) + ADP-alpha-D-glucose = [(1-&gt;4)-alpha-D-glucosyl](n+1) + ADP + H(+). It participates in glycan biosynthesis; glycogen biosynthesis. In terms of biological role, synthesizes alpha-1,4-glucan chains using ADP-glucose. This chain is Glycogen synthase, found in Shigella boydii serotype 18 (strain CDC 3083-94 / BS512).